The following is a 626-amino-acid chain: Phosphomethylpyrimidine synthase (626 aa).

Substrate is bound by residues asparagine 237, methionine 266, tyrosine 295, histidine 331, 351 to 353, 392 to 395, and glutamate 431; these read SRG and DGLR. Histidine 435 is a binding site for Zn(2+). Tyrosine 458 is a binding site for substrate. Residue histidine 499 coordinates Zn(2+). Residues cysteine 579, cysteine 582, and cysteine 587 each contribute to the [4Fe-4S] cluster site.

The protein belongs to the ThiC family. As to quaternary structure, homodimer. [4Fe-4S] cluster is required as a cofactor.

The enzyme catalyses 5-amino-1-(5-phospho-beta-D-ribosyl)imidazole + S-adenosyl-L-methionine = 4-amino-2-methyl-5-(phosphooxymethyl)pyrimidine + CO + 5'-deoxyadenosine + formate + L-methionine + 3 H(+). It participates in cofactor biosynthesis; thiamine diphosphate biosynthesis. Its function is as follows. Catalyzes the synthesis of the hydroxymethylpyrimidine phosphate (HMP-P) moiety of thiamine from aminoimidazole ribotide (AIR) in a radical S-adenosyl-L-methionine (SAM)-dependent reaction. The sequence is that of Phosphomethylpyrimidine synthase from Cupriavidus pinatubonensis (strain JMP 134 / LMG 1197) (Cupriavidus necator (strain JMP 134)).